The chain runs to 793 residues: Probable serine/threonine-protein kinase fnkA (793 aa).

Positions 11 to 358 (WEILSQLGTG…IINLISHNFI (348 aa)) constitute a Protein kinase domain. ATP-binding positions include 17–25 (LGTGAFGRV) and lysine 46. Aspartate 138 (proton acceptor) is an active-site residue. 5 FNIP repeats span residues 403–444 (FNQT…FGAR), 470–514 (YNQP…ILGD), 515–557 (YDQK…LGYR), 558–601 (FNKA…LGYC), and 691–733 (FIRP…LGSR).

The protein belongs to the protein kinase superfamily. STE Ser/Thr protein kinase family. Requires Mg(2+) as cofactor.

The catalysed reaction is L-seryl-[protein] + ATP = O-phospho-L-seryl-[protein] + ADP + H(+). The enzyme catalyses L-threonyl-[protein] + ATP = O-phospho-L-threonyl-[protein] + ADP + H(+). The protein is Probable serine/threonine-protein kinase fnkA of Dictyostelium discoideum (Social amoeba).